Here is a 648-residue protein sequence, read N- to C-terminus: MSSSRKQARLDAKSNIESLSVQPYPNSKKIYIDGSRPDIRVPMREISLADSLVGGTKENPTLIPNEPIQVYDTSGVYTDPNYDIDVYQGLPKLRERWIEDRTDTEMLKGVSSVYSQERLSDETLDELRYGNLPTIRRAKKGQCVTQLHYARQGIITPEMEYIAIRENMGRQKFADEQLNHQHPGHSFGANLPKEITPEFVRNEVAEGRAIIPANINHPEAEPMIIGRNFLIKVNANIGNSSVSSSIEEEVEKLVWSTRWGGDTVMDLSTGRNIHETREWILRNSPVPIGTVPMYQALEKVNGVAENLNWEVMRDTLIEQAEQGVDYFTIHAGLLLRYVPMTAKRVTGIVSRGGSIIAKWCLAHHQESFLYTHFREICEICAKYDVSLSLGDGLRPGSIADANDEAQFAELRTLGELTKVAWEYDVQVIIEGPGHVPMHMIKENMDEQLKHCHEAPFYTLGPLTTDIAPGYDHITSGIGAAMIGWYGCAMLCYVTPKEHLGLPNKEDVKIGLITYKLAAHAGDLAKGHPGAQIRDNALSKARFEFRWEDQFNLSLDPITAREFHDETLPQESGKVAHFCSMCGPKFCSMKISQEVREYAKDTEQVALDQAINIKMLDDPLEGMRQKSAEFKASGSELYHPAVDAEPVKS.

Residues N236, M265, Y294, H330, S350–G352, D391–R394, and E430 each bind substrate. H434 contacts Zn(2+). Y457 lines the substrate pocket. H498 contacts Zn(2+). [4Fe-4S] cluster is bound by residues C578, C581, and C586.

This sequence belongs to the ThiC family. Homodimer. [4Fe-4S] cluster is required as a cofactor.

The enzyme catalyses 5-amino-1-(5-phospho-beta-D-ribosyl)imidazole + S-adenosyl-L-methionine = 4-amino-2-methyl-5-(phosphooxymethyl)pyrimidine + CO + 5'-deoxyadenosine + formate + L-methionine + 3 H(+). The protein operates within cofactor biosynthesis; thiamine diphosphate biosynthesis. In terms of biological role, catalyzes the synthesis of the hydroxymethylpyrimidine phosphate (HMP-P) moiety of thiamine from aminoimidazole ribotide (AIR) in a radical S-adenosyl-L-methionine (SAM)-dependent reaction. This chain is Phosphomethylpyrimidine synthase, found in Aliivibrio salmonicida (strain LFI1238) (Vibrio salmonicida (strain LFI1238)).